The following is a 1080-amino-acid chain: Isoleucine--tRNA ligase (1080 aa).

The 'HIGH' region signature appears at 48–58; the sequence is PYASGSIHLGT. The 'KMSKS' region motif lies at 628–632; sequence KMSKS. Lys-631 contacts ATP.

This sequence belongs to the class-I aminoacyl-tRNA synthetase family. IleS type 2 subfamily. As to quaternary structure, monomer. Zn(2+) serves as cofactor.

It localises to the cytoplasm. It catalyses the reaction tRNA(Ile) + L-isoleucine + ATP = L-isoleucyl-tRNA(Ile) + AMP + diphosphate. Catalyzes the attachment of isoleucine to tRNA(Ile). As IleRS can inadvertently accommodate and process structurally similar amino acids such as valine, to avoid such errors it has two additional distinct tRNA(Ile)-dependent editing activities. One activity is designated as 'pretransfer' editing and involves the hydrolysis of activated Val-AMP. The other activity is designated 'posttransfer' editing and involves deacylation of mischarged Val-tRNA(Ile). The protein is Isoleucine--tRNA ligase of Methanopyrus kandleri (strain AV19 / DSM 6324 / JCM 9639 / NBRC 100938).